Reading from the N-terminus, the 309-residue chain is Enoyl-CoA hydratase 2, peroxisomal (309 aa).

Substrate-binding positions include 95–96 (HG), Lys124, 208–213 (DYNPLH), Gly231, and Phe261. Residues 183–295 (PQRQPLTVCE…TKVKERNKTV (113 aa)) form the MaoC-like domain. A Microbody targeting signal motif is present at residues 307 to 309 (SSL).

As to expression, ubiquitous.

Its subcellular location is the peroxisome. It catalyses the reaction a (3R)-3-hydroxyacyl-CoA = a (2E)-enoyl-CoA + H2O. Its pathway is lipid metabolism; fatty acid beta-oxidation. Functionally, bidirectional monofunctional enoyl-CoA hydratase 2 involved in the degradation of even cis-unsaturated fatty acids. Devoid of 3-hydroxyacyl-CoA dehydrogenase activity. The chain is Enoyl-CoA hydratase 2, peroxisomal (ECH2) from Arabidopsis thaliana (Mouse-ear cress).